Here is a 160-residue protein sequence, read N- to C-terminus: Lipoprotein signal peptidase (160 aa).

A run of 2 helical transmembrane segments spans residues 60–80 (IEWL…AFFI) and 84–104 (LPFL…AGTV). Active-site residues include D118 and D132. A helical transmembrane segment spans residues 128-148 (FNIADSCLTVGVIGLLLLYIV).

The protein belongs to the peptidase A8 family.

It localises to the cell membrane. The catalysed reaction is Release of signal peptides from bacterial membrane prolipoproteins. Hydrolyzes -Xaa-Yaa-Zaa-|-(S,diacylglyceryl)Cys-, in which Xaa is hydrophobic (preferably Leu), and Yaa (Ala or Ser) and Zaa (Gly or Ala) have small, neutral side chains.. It functions in the pathway protein modification; lipoprotein biosynthesis (signal peptide cleavage). In terms of biological role, this protein specifically catalyzes the removal of signal peptides from prolipoproteins. This Dehalococcoides mccartyi (strain CBDB1) protein is Lipoprotein signal peptidase.